Consider the following 316-residue polypeptide: Ornithine carbamoyltransferase (316 aa).

Residues 57–60 (STRT), Q84, R108, and 135–138 (HPCQ) contribute to the carbamoyl phosphate site. L-ornithine contacts are provided by residues N166, D230, and 234 to 235 (SM). Residues 269-270 (CL) and R297 contribute to the carbamoyl phosphate site.

The protein belongs to the aspartate/ornithine carbamoyltransferase superfamily. OTCase family.

It localises to the cytoplasm. The catalysed reaction is carbamoyl phosphate + L-ornithine = L-citrulline + phosphate + H(+). It participates in amino-acid biosynthesis; L-arginine biosynthesis; L-arginine from L-ornithine and carbamoyl phosphate: step 1/3. Its function is as follows. Reversibly catalyzes the transfer of the carbamoyl group from carbamoyl phosphate (CP) to the N(epsilon) atom of ornithine (ORN) to produce L-citrulline. The sequence is that of Ornithine carbamoyltransferase from Bacillus cereus (strain ZK / E33L).